The sequence spans 506 residues: Trans-cinnamate 4-monooxygenase (506 aa).

Residues Asp-3–Thr-23 traverse the membrane as a helical segment. Residues Arg-214 to Gln-219 and Ala-307 contribute to the (E)-cinnamate site. Cys-448 contacts heme.

The protein belongs to the cytochrome P450 family. Requires heme as cofactor.

The protein resides in the membrane. It carries out the reaction (E)-cinnamate + reduced [NADPH--hemoprotein reductase] + O2 = (E)-4-coumarate + oxidized [NADPH--hemoprotein reductase] + H2O + H(+). The protein operates within phenylpropanoid metabolism; trans-4-coumarate biosynthesis; trans-4-coumarate from trans-cinnamate: step 1/1. Its function is as follows. Catalyzes the first oxidative step of the phenylpropanoid pathway in higher plants by transforming trans-cinnamate into p-coumarate. The compounds formed by this pathway are essential components for lignification, pollination, and defense against ultraviolet light, predators and pathogens. The chain is Trans-cinnamate 4-monooxygenase (CYP73A10) from Petroselinum crispum (Parsley).